A 374-amino-acid polypeptide reads, in one-letter code: Probable dual-specificity RNA methyltransferase RlmN 3 (374 aa).

Residue Glu96 is the Proton acceptor of the active site. A Radical SAM core domain is found at 110-350 (DHSRKTICIS…VTLRREKGHD (241 aa)). Cysteines 117 and 355 form a disulfide. Residues Cys124, Cys128, and Cys131 each coordinate [4Fe-4S] cluster. S-adenosyl-L-methionine contacts are provided by residues 181-182 (GE), Ser213, 236-238 (SLH), and Asn312. Cys355 (S-methylcysteine intermediate) is an active-site residue.

The protein belongs to the radical SAM superfamily. RlmN family. Requires [4Fe-4S] cluster as cofactor.

The protein localises to the cytoplasm. The enzyme catalyses adenosine(2503) in 23S rRNA + 2 reduced [2Fe-2S]-[ferredoxin] + 2 S-adenosyl-L-methionine = 2-methyladenosine(2503) in 23S rRNA + 5'-deoxyadenosine + L-methionine + 2 oxidized [2Fe-2S]-[ferredoxin] + S-adenosyl-L-homocysteine. The catalysed reaction is adenosine(37) in tRNA + 2 reduced [2Fe-2S]-[ferredoxin] + 2 S-adenosyl-L-methionine = 2-methyladenosine(37) in tRNA + 5'-deoxyadenosine + L-methionine + 2 oxidized [2Fe-2S]-[ferredoxin] + S-adenosyl-L-homocysteine. In terms of biological role, specifically methylates position 2 of adenine 2503 in 23S rRNA and position 2 of adenine 37 in tRNAs. This Opitutus terrae (strain DSM 11246 / JCM 15787 / PB90-1) protein is Probable dual-specificity RNA methyltransferase RlmN 3.